The primary structure comprises 280 residues: Ribosomal RNA small subunit methyltransferase A (280 aa).

S-adenosyl-L-methionine is bound by residues His-15, Leu-17, Gly-42, Glu-64, Asp-89, and Asn-109.

This sequence belongs to the class I-like SAM-binding methyltransferase superfamily. rRNA adenine N(6)-methyltransferase family. RsmA subfamily.

The protein localises to the cytoplasm. The enzyme catalyses adenosine(1518)/adenosine(1519) in 16S rRNA + 4 S-adenosyl-L-methionine = N(6)-dimethyladenosine(1518)/N(6)-dimethyladenosine(1519) in 16S rRNA + 4 S-adenosyl-L-homocysteine + 4 H(+). Functionally, specifically dimethylates two adjacent adenosines (A1518 and A1519) in the loop of a conserved hairpin near the 3'-end of 16S rRNA in the 30S particle. May play a critical role in biogenesis of 30S subunits. In Prochlorococcus marinus (strain MIT 9303), this protein is Ribosomal RNA small subunit methyltransferase A.